A 65-amino-acid chain; its full sequence is Antimicrobial peptide 1 (65 aa).

An N-terminal signal peptide occupies residues 1 to 27; sequence MAKVSSAYLKFALVMILLLSVISAVMS. Disulfide bonds link cysteine 30–cysteine 47, cysteine 37–cysteine 51, and cysteine 46–cysteine 62.

The protein belongs to the AMP family. As to expression, seed specific.

Its subcellular location is the secreted. Functionally, possesses antifungal activity. The polypeptide is Antimicrobial peptide 1 (Phytolacca americana (American pokeweed)).